Consider the following 95-residue polypeptide: Aspartyl/glutamyl-tRNA(Asn/Gln) amidotransferase subunit C (95 aa).

Belongs to the GatC family. Heterotrimer of A, B and C subunits.

It carries out the reaction L-glutamyl-tRNA(Gln) + L-glutamine + ATP + H2O = L-glutaminyl-tRNA(Gln) + L-glutamate + ADP + phosphate + H(+). The catalysed reaction is L-aspartyl-tRNA(Asn) + L-glutamine + ATP + H2O = L-asparaginyl-tRNA(Asn) + L-glutamate + ADP + phosphate + 2 H(+). Its function is as follows. Allows the formation of correctly charged Asn-tRNA(Asn) or Gln-tRNA(Gln) through the transamidation of misacylated Asp-tRNA(Asn) or Glu-tRNA(Gln) in organisms which lack either or both of asparaginyl-tRNA or glutaminyl-tRNA synthetases. The reaction takes place in the presence of glutamine and ATP through an activated phospho-Asp-tRNA(Asn) or phospho-Glu-tRNA(Gln). This is Aspartyl/glutamyl-tRNA(Asn/Gln) amidotransferase subunit C from Geobacter sp. (strain M21).